The primary structure comprises 477 residues: Histone-lysine N-methyltransferase SUV39H2 (477 aa).

The tract at residues 1–59 is disordered; the sequence is MATARAKARGSEAGARCHRAPGPPPRPKARRTARRRRAETLTARRSRPSAGERRAGSQR. Over residues 27-37 the composition is skewed to basic residues; it reads PKARRTARRRR. One can recognise a Chromo domain in the interval 118–176; sequence YEVEYLCDYKVAKGVEYYLVKWKGWPDSTNTWEPLRNLRCPQLLRQFSDDKKTYLAQER. One can recognise a Pre-SET domain in the interval 256–314; it reads FGCSCTDCFFDKCCPAEAGVVLAYNKKQQIKIQPGTPIYECNSRCRCGPECPNRIVQKG. 9 residues coordinate Zn(2+): C258, C260, C263, C268, C269, C296, C300, C302, and C306. An SET domain is found at 317 to 440; sequence YSLCIFKTSN…AGEELTFDYQ (124 aa). Residues 328–330, Y371, and 397–398 contribute to the S-adenosyl-L-methionine site; these read CGW and NH. C400 contacts Zn(2+). Residues S448, S451, and S455 each carry the phosphoserine modification. One can recognise a Post-SET domain in the interval 461–477; it reads VRTQCKCGAETCRGYLN. Zn(2+) contacts are provided by C465, C467, and C472.

This sequence belongs to the class V-like SAM-binding methyltransferase superfamily. Histone-lysine methyltransferase family. Suvar3-9 subfamily. Interacts with SMAD5. The large PER complex involved in the histone methylation is composed of at least PER2, CBX3, TRIM28, SUV39H1 and/or SUV39H2; CBX3 mediates the formation of the complex. In terms of processing, ubiquitinated by the DCX(DCAF13) E3 ubiquitin ligase complex, leading to its degradation. In terms of tissue distribution, testis specific; predominant expression in type B spermatogonia and preleptotene spermatocytes.

It is found in the nucleus. The protein resides in the chromosome. Its subcellular location is the centromere. It carries out the reaction L-lysyl(9)-[histone H3] + 3 S-adenosyl-L-methionine = N(6),N(6),N(6)-trimethyl-L-lysyl(9)-[histone H3] + 3 S-adenosyl-L-homocysteine + 3 H(+). Histone methyltransferase that specifically trimethylates 'Lys-9' of histone H3 using monomethylated H3 'Lys-9' as substrate. H3 'Lys-9' trimethylation represents a specific tag for epigenetic transcriptional repression by recruiting HP1 (CBX1, CBX3 and/or CBX5) proteins to methylated histones. Mainly functions in heterochromatin regions, thereby playing a central role in the establishment of constitutive heterochromatin at pericentric and telomere regions. H3 'Lys-9' trimethylation is also required to direct DNA methylation at pericentric repeats. SUV39H1 is targeted to histone H3 via its interaction with RB1 and is involved in many processes, such as cell cycle regulation, transcriptional repression and regulation of telomere length. May participate in regulation of higher-order chromatin organization during spermatogenesis. Recruited by the large PER complex to the E-box elements of the circadian target genes such as PER2 itself or PER1, contributes to the conversion of local chromatin to a heterochromatin-like repressive state through H3 'Lys-9' trimethylation. The protein is Histone-lysine N-methyltransferase SUV39H2 (Suv39h2) of Mus musculus (Mouse).